A 593-amino-acid chain; its full sequence is Methionine--tRNA ligase, mitochondrial (593 aa).

The transit peptide at 1–29 (MLRVSAFRLLGRRGASRVSLLEDFSFRYY) directs the protein to the mitochondrion. A 'HIGH' region motif is present at residues 52-62 (FYVNAAPHIGH). The 'KMSKS' region motif lies at 347-351 (KMSKS). Lys350 lines the ATP pocket.

The protein belongs to the class-I aminoacyl-tRNA synthetase family.

The protein localises to the mitochondrion matrix. It carries out the reaction tRNA(Met) + L-methionine + ATP = L-methionyl-tRNA(Met) + AMP + diphosphate. The polypeptide is Methionine--tRNA ligase, mitochondrial (MARS2) (Bos taurus (Bovine)).